A 602-amino-acid chain; its full sequence is Glycoprotein G (602 aa).

At 1-49 the chain is on the intravirion side; the sequence is MPAENKKVRFENTTSDKGKIPSKVIKSYYGTMDIKKINEGLLDSKILSA. Residues 50 to 70 traverse the membrane as a helical segment; that stretch reads FNTVIALLGSIVIIVMNIMII. Topologically, residues 71 to 602 are virion surface; that stretch reads QNYTRSTDNQ…FAVKIPEQCT (532 aa). Residues Asn-72 and Asn-159 are each glycosylated (N-linked (GlcNAc...) asparagine; by host). Residues 96–163 are stalk; that stretch reads GLADKIGTEI…KIHECNISCP (68 aa). The interval 177 to 602 is head; it reads GVSNLVGLPN…FAVKIPEQCT (426 aa). Cystine bridges form between Cys-189–Cys-601, Cys-216–Cys-240, Cys-282–Cys-295, Cys-382–Cys-395, Cys-387–Cys-499, Cys-493–Cys-503, and Cys-565–Cys-574. 2 N-linked (GlcNAc...) asparagine; by host glycosylation sites follow: Asn-306 and Asn-378. N-linked (GlcNAc...) asparagine; by host glycans are attached at residues Asn-417 and Asn-481. Asn-529 is a glycosylation site (N-linked (GlcNAc...) asparagine; by host).

Belongs to the paramyxoviruses hemagglutinin-neuraminidase family. In terms of assembly, homotetramer; disulfide-linked. Interacts with host EFNB2; this interaction allows the virus entry into the host cell. Interacts with host EFNB3; this interaction allows the virus entry into the host cell. Interacts with the fusion glycoprotein; this interaction involves both head and stalk regions of glygoprotein G. N-glycosylated.

The protein resides in the virion membrane. It is found in the host cell membrane. Its function is as follows. Interacts with host ephrinB2/EFNB2 or ephrin B3/EFNB3 to provide virion attachment to target cell. This attachment induces virion internalization predominantly through clathrin-mediated endocytosis. The sequence is that of Glycoprotein G (G) from Cynopterus brachyotis (Lesser short-nosed fruit bat).